The chain runs to 353 residues: UDP-N-acetylglucosamine--N-acetylmuramyl-(pentapeptide) pyrophosphoryl-undecaprenol N-acetylglucosamine transferase (353 aa).

Residues Thr10–Gly12, Asn124, Ser183, and Gln283 each bind UDP-N-acetyl-alpha-D-glucosamine.

The protein belongs to the glycosyltransferase 28 family. MurG subfamily.

The protein resides in the cell inner membrane. The catalysed reaction is di-trans,octa-cis-undecaprenyl diphospho-N-acetyl-alpha-D-muramoyl-L-alanyl-D-glutamyl-meso-2,6-diaminopimeloyl-D-alanyl-D-alanine + UDP-N-acetyl-alpha-D-glucosamine = di-trans,octa-cis-undecaprenyl diphospho-[N-acetyl-alpha-D-glucosaminyl-(1-&gt;4)]-N-acetyl-alpha-D-muramoyl-L-alanyl-D-glutamyl-meso-2,6-diaminopimeloyl-D-alanyl-D-alanine + UDP + H(+). It functions in the pathway cell wall biogenesis; peptidoglycan biosynthesis. In terms of biological role, cell wall formation. Catalyzes the transfer of a GlcNAc subunit on undecaprenyl-pyrophosphoryl-MurNAc-pentapeptide (lipid intermediate I) to form undecaprenyl-pyrophosphoryl-MurNAc-(pentapeptide)GlcNAc (lipid intermediate II). In Helicobacter acinonychis (strain Sheeba), this protein is UDP-N-acetylglucosamine--N-acetylmuramyl-(pentapeptide) pyrophosphoryl-undecaprenol N-acetylglucosamine transferase.